The chain runs to 308 residues: Oxygen-dependent coproporphyrinogen-III oxidase (308 aa).

Ser100 contacts substrate. A divalent metal cation-binding residues include His104 and His114. His114 serves as the catalytic Proton donor. 116 to 118 lines the substrate pocket; that stretch reads NFR. A divalent metal cation is bound by residues His153 and His183. The segment at 248–283 is important for dimerization; that stretch reads YVEFNLVFDRGTIFGLQSGGRTESILSSMPPMATWK. 266–268 provides a ligand contact to substrate; the sequence is GGR.

This sequence belongs to the aerobic coproporphyrinogen-III oxidase family. In terms of assembly, homodimer. Requires a divalent metal cation as cofactor.

The protein localises to the cytoplasm. It carries out the reaction coproporphyrinogen III + O2 + 2 H(+) = protoporphyrinogen IX + 2 CO2 + 2 H2O. Its pathway is porphyrin-containing compound metabolism; protoporphyrin-IX biosynthesis; protoporphyrinogen-IX from coproporphyrinogen-III (O2 route): step 1/1. In terms of biological role, involved in the heme biosynthesis. Catalyzes the aerobic oxidative decarboxylation of propionate groups of rings A and B of coproporphyrinogen-III to yield the vinyl groups in protoporphyrinogen-IX. This chain is Oxygen-dependent coproporphyrinogen-III oxidase, found in Francisella tularensis subsp. holarctica (strain FTNF002-00 / FTA).